The sequence spans 322 residues: Eukaryotic translation initiation factor 3 subunit I (322 aa).

WD repeat units follow at residues 4–43, 46–85, 141–180, 184–223, and 281–322; these read GHERSITQIKYNREGDLLFSSSKDQKPNVWYSLNGERLGT, GHQGAVWCLDVDWESRKLITGAGDMTTKIWDVEYGTVIAS, MVESKITSMLWGPLDETIITGHDNGNIAIWDIRKGQKVVD, DHTAGINDMQLSKDGTMFVTASRDTTAKLFDSESLMCLKT, and GHFG…NIFE.

The protein belongs to the eIF-3 subunit I family. As to quaternary structure, component of the eukaryotic translation initiation factor 3 (eIF-3) complex. The eIF-3 complex interacts with pix.

It is found in the cytoplasm. Its function is as follows. Component of the eukaryotic translation initiation factor 3 (eIF-3) complex, which is involved in protein synthesis of a specialized repertoire of mRNAs and, together with other initiation factors, stimulates binding of mRNA and methionyl-tRNAi to the 40S ribosome. The eIF-3 complex specifically targets and initiates translation of a subset of mRNAs involved in cell proliferation. This Drosophila virilis (Fruit fly) protein is Eukaryotic translation initiation factor 3 subunit I.